The sequence spans 2615 residues: Collagen alpha-5(VI) chain (2615 aa).

The N-terminal stretch at 1–18 is a signal peptide; sequence MKILLIIFVLIIWTETLA. Residues 19–1394 are nonhelical region; that stretch reads DQSPGPGPVY…TCCCTFCKCP (1376 aa). 7 VWFA domains span residues 30–209, 236–413, 442–612, 628–797, 814–987, 1005–1178, and 1194–1376; these read DVVF…IKDV, DLVF…LKKL, DIHF…KNEV, DIMF…ERKL, DVVF…FTLV, DVIF…KKRI, and DIVV…KLSQ. Residues Asn-201 and Asn-260 are each glycosylated (N-linked (GlcNAc...) asparagine). Asn-835 carries N-linked (GlcNAc...) asparagine glycosylation. Collagen-like domains follow at residues 1395–1446, 1434–1490, 1464–1520, 1524–1580, 1579–1629, and 1674–1729; these read GIPG…GCPG, GPQG…KGDP, GDDG…PGQN, KGQK…TLGA, GAEG…LGKK, and GDAG…MAGQ. The tract at residues 1395–1728 is triple-helical region; that stretch reads GIPGPHGTRG…GQRGIKGMAG (334 aa). The disordered stretch occupies residues 1404–1693; that stretch reads GLQAMKGSQG…NPGIPGGPGP (290 aa). The Cell attachment site motif lies at 1430–1432; that stretch reads RGD. Residues 1511–1522 show a composition bias toward low complexity; that stretch reads PGDPGNPGQNNN. Composition is skewed to low complexity over residues 1601–1611 and 1622–1641; these read SQGQKGPQGSP and RPGL…LGPV. The nonhelical region stretch occupies residues 1729–2615; the sequence is QPVYSQCDLI…EDKEMEATDI (887 aa). 3 consecutive VWFA domains span residues 1758-1965, 1963-2154, and 2291-2487; these read ELVF…MDVV, DVVF…AKFL, and DVAF…VKPF. Asn-2509 carries N-linked (GlcNAc...) asparagine glycosylation.

This sequence belongs to the type VI collagen family. As to quaternary structure, trimers composed of three different chains: alpha-1(VI), alpha-2(VI), and alpha-3(VI) or alpha-5(VI) or alpha-6(VI). Prolines at the third position of the tripeptide repeating unit (G-X-Y) are hydroxylated in some or all of the chains. In terms of tissue distribution, expressed in skin, followed by lung, small intestine, colon and testis. In skin, it is expressed in the epidermis with strongest staining in suprabasal viable layers. In ATOD patients, it is absent in the most differentiated upper spinous and granular layers (at protein level).

It localises to the secreted. The protein resides in the extracellular space. Its subcellular location is the extracellular matrix. In terms of biological role, collagen VI acts as a cell-binding protein. The sequence is that of Collagen alpha-5(VI) chain (COL6A5) from Homo sapiens (Human).